We begin with the raw amino-acid sequence, 905 residues long: Alanine--tRNA ligase (905 aa).

Residues His-595, His-599, Cys-696, and His-700 each coordinate Zn(2+).

It belongs to the class-II aminoacyl-tRNA synthetase family. Zn(2+) is required as a cofactor.

It is found in the cytoplasm. It catalyses the reaction tRNA(Ala) + L-alanine + ATP = L-alanyl-tRNA(Ala) + AMP + diphosphate. Functionally, catalyzes the attachment of alanine to tRNA(Ala) in a two-step reaction: alanine is first activated by ATP to form Ala-AMP and then transferred to the acceptor end of tRNA(Ala). Also edits incorrectly charged Ser-tRNA(Ala) and Gly-tRNA(Ala) via its editing domain. The protein is Alanine--tRNA ligase of Anaeromyxobacter dehalogenans (strain 2CP-C).